The following is a 144-amino-acid chain: ATP synthase epsilon chain (144 aa).

The protein belongs to the ATPase epsilon chain family. In terms of assembly, F-type ATPases have 2 components, CF(1) - the catalytic core - and CF(0) - the membrane proton channel. CF(1) has five subunits: alpha(3), beta(3), gamma(1), delta(1), epsilon(1). CF(0) has three main subunits: a, b and c.

It is found in the cell inner membrane. Produces ATP from ADP in the presence of a proton gradient across the membrane. This Hydrogenovibrio crunogenus (strain DSM 25203 / XCL-2) (Thiomicrospira crunogena) protein is ATP synthase epsilon chain.